We begin with the raw amino-acid sequence, 95 residues long: MSRDYKGKKIVIYPQYIDSSIPRSRGRRIPRNIAIPKPRIEEIIEAAEELGLNPKYEESAYPKHWWIKGRIVVDKVGSKLNTLKLIAQKIKDLRK.

This sequence belongs to the SRP19 family. As to quaternary structure, part of the signal recognition particle protein translocation system, which is composed of SRP and FtsY. Archaeal SRP consists of a 7S RNA molecule of 300 nucleotides and two protein subunits: SRP54 and SRP19.

It localises to the cytoplasm. Functionally, involved in targeting and insertion of nascent membrane proteins into the cytoplasmic membrane. Binds directly to 7S RNA and mediates binding of the 54 kDa subunit of the SRP. In Staphylothermus marinus (strain ATCC 43588 / DSM 3639 / JCM 9404 / F1), this protein is Signal recognition particle 19 kDa protein.